The primary structure comprises 413 residues: 1-deoxy-D-xylulose 5-phosphate reductoisomerase (413 aa).

The NADPH site is built by Thr-21, Gly-22, Ser-23, Ile-24, Gly-47, and Asn-127. Lys-128 lines the 1-deoxy-D-xylulose 5-phosphate pocket. Residue Glu-129 participates in NADPH binding. Residue Asp-151 coordinates Mn(2+). 4 residues coordinate 1-deoxy-D-xylulose 5-phosphate: Ser-152, Glu-153, Ser-177, and His-200. Glu-153 is a Mn(2+) binding site. Residue Gly-206 participates in NADPH binding. 1-deoxy-D-xylulose 5-phosphate-binding residues include Ser-213, Asn-218, Lys-219, and Glu-222. Glu-222 is a binding site for Mn(2+).

The protein belongs to the DXR family. The cofactor is Mg(2+). It depends on Mn(2+) as a cofactor.

The catalysed reaction is 2-C-methyl-D-erythritol 4-phosphate + NADP(+) = 1-deoxy-D-xylulose 5-phosphate + NADPH + H(+). It functions in the pathway isoprenoid biosynthesis; isopentenyl diphosphate biosynthesis via DXP pathway; isopentenyl diphosphate from 1-deoxy-D-xylulose 5-phosphate: step 1/6. Its function is as follows. Catalyzes the NADPH-dependent rearrangement and reduction of 1-deoxy-D-xylulose-5-phosphate (DXP) to 2-C-methyl-D-erythritol 4-phosphate (MEP). The sequence is that of 1-deoxy-D-xylulose 5-phosphate reductoisomerase from Mycobacterium bovis (strain ATCC BAA-935 / AF2122/97).